The sequence spans 859 residues: MRDYEFKEIEKKWQERWSKDNIFKTENQVEGKENYYVLSMLPYPSGKLHVGHARNYTIGDVISRYKRMKGYNVLQPMGWDSFGLPAENAAIQNGTHPAIWTKSNIENMRRQLKLMGFSYDWEREIASYTPEYYKWNQWLFKRMYEKGLIYKKKSLVNWCPDCQTVLANEQVEDGMCWRHSKTHVIQKELEQWFFKITDYADELLEGHEEIKDGWPEKVLTMQKNWIGKSFGTELKLKVVETGEDLPIFTTRIDTIYGVSYAVVAPEHPIVEKILKDNPSIKDKVTEMKNTDIIERGAEGREKNGIDSGWHIENPVNKEIVPLWIADYVLMNYGTGAVMGVPAHDERDFVFAGKYNLPVKQVITSKKSDEKVQLPYIEEGVMINSGEFNGLSSKDALVKIAEYVEEKGYGKRTYKYRLKDWGISRQRYWGTPIPALYCEKCGEVLEKDENLPVLLPDDIEFSGNGNPLETSNKFKEATCPCCGGKARRDTDTMDTFVDSSWYFLRYCDPKNLNLPFSKEIVDKWTPVDQYIGGVEHAVMHLLYARFFHKVLRDLGLLSSNEPFKRLLTQGMVLGPSYYSEKENKYLLQKAAIIKGDKAYSQSGEELQVKVEKMSKSKNNGVDPEEMLDKYGADTTRLFIMFAAPPEKELEWNENGLAGAYRFLTRVWRLVFENSELVKNANDEIDYNKLSKEDKTLLIKLNQTIKKVTDAIENNYHFNTAIAANMELINEVQTYVSSSMNSEQAAKILGYTLKKIIIMLSPFVPHFCDEIWEELGEKGYLFNEKWPEYDEKMLSSDETTIAVQVNGKVRGSFEIAKDSEQALVEKTALKLPNVAKHLEGMNVVKIIVIPNKIVNIVVKPQ.

Residues 42–52 carry the 'HIGH' region motif; it reads PYPSGKLHVGH. The short motif at 611 to 615 is the 'KMSKS' region element; that stretch reads KMSKS. Position 614 (K614) interacts with ATP.

It belongs to the class-I aminoacyl-tRNA synthetase family.

It localises to the cytoplasm. It catalyses the reaction tRNA(Leu) + L-leucine + ATP = L-leucyl-tRNA(Leu) + AMP + diphosphate. The protein is Leucine--tRNA ligase of Fusobacterium nucleatum subsp. nucleatum (strain ATCC 25586 / DSM 15643 / BCRC 10681 / CIP 101130 / JCM 8532 / KCTC 2640 / LMG 13131 / VPI 4355).